Consider the following 343-residue polypeptide: Twinfilin (343 aa).

2 consecutive ADF-H domains span residues 11–135 (EQLA…EGYR) and 184–312 (EATV…DELH). Residues 319–343 (RPAFAKPKGPPNRGAKRLTRPTAED) form a disordered region.

Belongs to the actin-binding proteins ADF family. Twinfilin subfamily. Interacts with G-actin; ADP-actin form.

It is found in the cytoplasm. It localises to the cytoskeleton. The protein localises to the cell cortex. Actin-binding protein involved in motile and morphological processes. Inhibits actin polymerization, likely by sequestering G-actin. The chain is Twinfilin (twf) from Drosophila melanogaster (Fruit fly).